A 198-amino-acid chain; its full sequence is Small ribosomal subunit protein uS5 (198 aa).

The S5 DRBM domain maps to 46-109 (LEDDVLEISM…NNAKLNIFKV (64 aa)).

The protein belongs to the universal ribosomal protein uS5 family. In terms of assembly, part of the 30S ribosomal subunit. Contacts protein S4.

With S4 and S12 plays an important role in translational accuracy. This is Small ribosomal subunit protein uS5 from Archaeoglobus fulgidus (strain ATCC 49558 / DSM 4304 / JCM 9628 / NBRC 100126 / VC-16).